We begin with the raw amino-acid sequence, 77 residues long: Acyl carrier protein (77 aa).

Residues 2–77 form the Carrier domain; the sequence is ADVMERVTKI…DVVDYINNNQ (76 aa). Residue Ser-37 is modified to O-(pantetheine 4'-phosphoryl)serine.

The protein belongs to the acyl carrier protein (ACP) family. 4'-phosphopantetheine is transferred from CoA to a specific serine of apo-ACP by AcpS. This modification is essential for activity because fatty acids are bound in thioester linkage to the sulfhydryl of the prosthetic group.

Its subcellular location is the cytoplasm. It participates in lipid metabolism; fatty acid biosynthesis. Carrier of the growing fatty acid chain in fatty acid biosynthesis. The protein is Acyl carrier protein of Shouchella clausii (strain KSM-K16) (Alkalihalobacillus clausii).